A 316-amino-acid polypeptide reads, in one-letter code: Cytochrome c biogenesis protein CcsA (316 aa).

The next 8 helical transmembrane spans lie at 12-32 (HISLSIILIVITIFLMNLLVY), 44-64 (GMVASFLCITGLLVIRWIYSG), 71-91 (LYESLMFLSWSFSIFYMIPYF), 98-118 (LNVLTAPGTIFTQGFATSGVL), 145-165 (LSYAALLCGSLLSVALLVILF), 222-242 (VISLGFLFLTIGILSGAVWAN), 256-270 (TWAFITWTIFAIYLH), and 283-303 (AIVASIGFFIIWICYFGVNLL).

This sequence belongs to the CcmF/CycK/Ccl1/NrfE/CcsA family. In terms of assembly, may interact with Ccs1.

The protein resides in the plastid. The protein localises to the chloroplast thylakoid membrane. Required during biogenesis of c-type cytochromes (cytochrome c6 and cytochrome f) at the step of heme attachment. The protein is Cytochrome c biogenesis protein CcsA of Ranunculus macranthus (Large buttercup).